The sequence spans 377 residues: uncharacterized protein (377 aa).

The N-terminal stretch at 1–22 (MKFKYGTVVLGSFLGLSVVLAA) is a signal peptide. C23 is lipidated: N-palmitoyl cysteine. Residue C23 is the site of S-diacylglycerol cysteine attachment. The disordered stretch occupies residues 217–260 (AKANGETNQKGRKAAKSNKTALVQLKNGADTTTNEENKDTKTSD). Basic and acidic residues predominate over residues 251–260 (EENKDTKTSD).

The protein belongs to the MG185/MG260 family.

It localises to the cell membrane. This is an uncharacterized protein from Mycoplasma pneumoniae (strain ATCC 29342 / M129 / Subtype 1) (Mycoplasmoides pneumoniae).